Reading from the N-terminus, the 958-residue chain is Coiled-coil domain-containing protein 187 (958 aa).

Residues 116–132 (SSVSSGRMSGSSGGHES) are compositionally biased toward low complexity. 4 disordered regions span residues 116–160 (SSVS…SDPR), 345–447 (ELTR…PRFF), 470–492 (QDIS…QRPW), and 510–602 (EPSP…KAQA). 2 stretches are compositionally biased toward polar residues: residues 374-398 (LQST…NSSL) and 470-491 (QDIS…SQRP). Residues 536–545 (SSPSSKGKSA) show a composition bias toward low complexity. Residues 718 to 743 (KQARLQALETMAEALRQRVDILTTKL) are a coiled coil. The tract at residues 916–958 (EVKKEGLVTPWTTRSCGKGEPADRPWAGWSGGQGGLPWASSTA) is disordered.

In Mus musculus (Mouse), this protein is Coiled-coil domain-containing protein 187.